Reading from the N-terminus, the 218-residue chain is Capsid protein (218 aa).

At Met-1 the chain carries N-acetylmethionine; by host. The segment at Met-1–Ala-28 is disordered. Residues Arg-11–Ser-21 show a composition bias toward basic residues.

Belongs to the cucumovirus capsid protein family.

It is found in the virion. Its function is as follows. Capsid protein. Probably binds RNA and plays a role in packaging. This Cucumis sativus (Cucumber) protein is Capsid protein.